The primary structure comprises 1379 residues: DNA-directed RNA polymerase subunit beta (1379 aa).

It belongs to the RNA polymerase beta chain family. As to quaternary structure, the RNAP catalytic core consists of 2 alpha, 1 beta, 1 beta' and 1 omega subunit. When a sigma factor is associated with the core the holoenzyme is formed, which can initiate transcription.

It catalyses the reaction RNA(n) + a ribonucleoside 5'-triphosphate = RNA(n+1) + diphosphate. DNA-dependent RNA polymerase catalyzes the transcription of DNA into RNA using the four ribonucleoside triphosphates as substrates. The protein is DNA-directed RNA polymerase subunit beta of Chelativorans sp. (strain BNC1).